Here is a 644-residue protein sequence, read N- to C-terminus: Replication protein E1 (644 aa).

Positions 86–88 (KRK) match the Nuclear localization signal motif. S92 and S96 each carry phosphoserine; by host. The segment at 180-346 (VPTSPTNQLL…LTIIQHGVDD (167 aa)) is DNA-binding region. Positions 445-595 (VEFITFLCAL…LPFDKNRNPV (151 aa)) constitute an SF3 helicase domain. 471-478 (GPANTGKS) contacts ATP. Residue K552 forms a Glycyl lysine isopeptide (Lys-Gly) (interchain with G-Cter in SUMO) linkage.

This sequence belongs to the papillomaviridae E1 protein family. As to quaternary structure, can form hexamers. Interacts with E2 protein; this interaction increases E1 DNA binding specificity. Interacts with host DNA polymerase subunit POLA2. Interacts with host single stranded DNA-binding protein RPA1. Interacts with host TOP1; this interaction stimulates the enzymatic activity of TOP1. Phosphorylated. Post-translationally, sumoylated.

Its subcellular location is the host nucleus. The catalysed reaction is Couples ATP hydrolysis with the unwinding of duplex DNA by translocating in the 3'-5' direction.. It carries out the reaction ATP + H2O = ADP + phosphate + H(+). Functionally, ATP-dependent DNA 3'-5' helicase required for initiation of viral DNA replication. It forms a complex with the viral E2 protein. The E1-E2 complex binds to the replication origin which contains binding sites for both proteins. During the initial step, a dimer of E1 interacts with a dimer of protein E2 leading to a complex that binds the viral origin of replication with high specificity. Then, a second dimer of E1 displaces the E2 dimer in an ATP-dependent manner to form the E1 tetramer. Following this, two E1 monomers are added to each half of the site, which results in the formation of two E1 trimers on the viral ori. Subsequently, two hexamers will be created. The double hexamer acts as a bi-directional helicase machinery and unwinds the viral DNA and then recruits the host DNA polymerase to start replication. In Human papillomavirus 59, this protein is Replication protein E1.